Reading from the N-terminus, the 379-residue chain is Succinyl-diaminopimelate desuccinylase (379 aa).

Residue His-68 participates in Zn(2+) binding. Asp-70 is an active-site residue. Asp-101 contributes to the Zn(2+) binding site. The active-site Proton acceptor is Glu-134. The Zn(2+) site is built by Glu-135, Glu-163, and His-352.

It belongs to the peptidase M20A family. DapE subfamily. In terms of assembly, homodimer. Zn(2+) serves as cofactor. The cofactor is Co(2+).

It carries out the reaction N-succinyl-(2S,6S)-2,6-diaminopimelate + H2O = (2S,6S)-2,6-diaminopimelate + succinate. Its pathway is amino-acid biosynthesis; L-lysine biosynthesis via DAP pathway; LL-2,6-diaminopimelate from (S)-tetrahydrodipicolinate (succinylase route): step 3/3. Functionally, catalyzes the hydrolysis of N-succinyl-L,L-diaminopimelic acid (SDAP), forming succinate and LL-2,6-diaminopimelate (DAP), an intermediate involved in the bacterial biosynthesis of lysine and meso-diaminopimelic acid, an essential component of bacterial cell walls. The polypeptide is Succinyl-diaminopimelate desuccinylase (Dinoroseobacter shibae (strain DSM 16493 / NCIMB 14021 / DFL 12)).